Reading from the N-terminus, the 171-residue chain is Adenine phosphoribosyltransferase (171 aa).

This sequence belongs to the purine/pyrimidine phosphoribosyltransferase family. Homodimer.

The protein localises to the cytoplasm. It carries out the reaction AMP + diphosphate = 5-phospho-alpha-D-ribose 1-diphosphate + adenine. It functions in the pathway purine metabolism; AMP biosynthesis via salvage pathway; AMP from adenine: step 1/1. Its function is as follows. Catalyzes a salvage reaction resulting in the formation of AMP, that is energically less costly than de novo synthesis. The protein is Adenine phosphoribosyltransferase of Acidiphilium cryptum (strain JF-5).